Here is an 881-residue protein sequence, read N- to C-terminus: Alanine--tRNA ligase (881 aa).

Positions 563, 567, 672, and 676 each coordinate Zn(2+).

It belongs to the class-II aminoacyl-tRNA synthetase family. It depends on Zn(2+) as a cofactor.

Its subcellular location is the cytoplasm. The enzyme catalyses tRNA(Ala) + L-alanine + ATP = L-alanyl-tRNA(Ala) + AMP + diphosphate. In terms of biological role, catalyzes the attachment of alanine to tRNA(Ala) in a two-step reaction: alanine is first activated by ATP to form Ala-AMP and then transferred to the acceptor end of tRNA(Ala). Also edits incorrectly charged Ser-tRNA(Ala) and Gly-tRNA(Ala) via its editing domain. The sequence is that of Alanine--tRNA ligase from Azorhizobium caulinodans (strain ATCC 43989 / DSM 5975 / JCM 20966 / LMG 6465 / NBRC 14845 / NCIMB 13405 / ORS 571).